Reading from the N-terminus, the 263-residue chain is Endonuclease 8 (263 aa).

The Schiff-base intermediate with DNA role is filled by Pro2. Residue Glu3 is the Proton donor of the active site. Lys53 (proton donor; for beta-elimination activity) is an active-site residue. 3 residues coordinate DNA: Gln70, Arg125, and Asn169. The FPG-type zinc finger occupies 229–263; sequence KVFHRDGEACERCGGIIEKTTLSSRPFYWCPHCQK. Arg253 functions as the Proton donor; for delta-elimination activity in the catalytic mechanism.

The protein belongs to the FPG family. The cofactor is Zn(2+).

It carries out the reaction 2'-deoxyribonucleotide-(2'-deoxyribose 5'-phosphate)-2'-deoxyribonucleotide-DNA = a 3'-end 2'-deoxyribonucleotide-(2,3-dehydro-2,3-deoxyribose 5'-phosphate)-DNA + a 5'-end 5'-phospho-2'-deoxyribonucleoside-DNA + H(+). Involved in base excision repair of DNA damaged by oxidation or by mutagenic agents. Acts as a DNA glycosylase that recognizes and removes damaged bases. Has a preference for oxidized pyrimidines, such as thymine glycol, 5,6-dihydrouracil and 5,6-dihydrothymine. Has AP (apurinic/apyrimidinic) lyase activity and introduces nicks in the DNA strand. Cleaves the DNA backbone by beta-delta elimination to generate a single-strand break at the site of the removed base with both 3'- and 5'-phosphates. In Salmonella enteritidis PT4 (strain P125109), this protein is Endonuclease 8.